The primary structure comprises 365 residues: GTPase Obg (365 aa).

The region spanning 1–159 is the Obg domain; it reads MKFIDEARIE…RMLKLELKVL (159 aa). Residues 160-334 enclose the OBG-type G domain; sequence ADVGLLGMPN…LIYAIKDHLQ (175 aa). GTP contacts are provided by residues 166–173, 191–195, 213–216, 284–287, and 315–317; these read GMPNAGKS, FTTLH, DIPG, NKLD, and SAL. The Mg(2+) site is built by Ser173 and Thr193.

It belongs to the TRAFAC class OBG-HflX-like GTPase superfamily. OBG GTPase family. Monomer. Mg(2+) is required as a cofactor.

It localises to the cytoplasm. An essential GTPase which binds GTP, GDP and possibly (p)ppGpp with moderate affinity, with high nucleotide exchange rates and a fairly low GTP hydrolysis rate. Plays a role in control of the cell cycle, stress response, ribosome biogenesis and in those bacteria that undergo differentiation, in morphogenesis control. The sequence is that of GTPase Obg from Cupriavidus necator (strain ATCC 17699 / DSM 428 / KCTC 22496 / NCIMB 10442 / H16 / Stanier 337) (Ralstonia eutropha).